The following is a 359-amino-acid chain: Peptide chain release factor 1 (359 aa).

Q235 bears the N5-methylglutamine mark. The interval 280–306 is disordered; that stretch reads AERQRADSERSADRKSQVGSGDRSERI.

Belongs to the prokaryotic/mitochondrial release factor family. Methylated by PrmC. Methylation increases the termination efficiency of RF1.

The protein resides in the cytoplasm. Peptide chain release factor 1 directs the termination of translation in response to the peptide chain termination codons UAG and UAA. The protein is Peptide chain release factor 1 of Rhizobium johnstonii (strain DSM 114642 / LMG 32736 / 3841) (Rhizobium leguminosarum bv. viciae).